A 275-amino-acid polypeptide reads, in one-letter code: Interleukin-2 receptor subunit alpha (275 aa).

Positions 1-21 (MEPSLLMWRFFVFIVVPGCVT) are cleaved as a signal peptide. 2 Sushi domains span residues 22-81 (EACH…FCNS) and 121-186 (GHCE…KCIS). The Extracellular segment spans residues 22 to 243 (EACHDDPPSL…DTFIFTTEYQ (222 aa)). Intrachain disulfides connect C24–C64, C49–C77, and C51–C79. N-linked (GlcNAc...) asparagine glycosylation occurs at N80. A disordered region spans residues 86–130 (KNPVKPVTPGSEEQRERKPTDAQSQTQPPEQADLPGHCEEPPPWE). Basic and acidic residues predominate over residues 121–130 (GHCEEPPPWE). Cystine bridges form between C123/C168 and C152/C184. The tract at residues 188-213 (GANSQAPDEAEPPESTEAPPGSGTFL) is disordered. Residues 244-262 (IAVAGCILLLSSILLLSCL) traverse the membrane as a helical segment. At 263–275 (TWQRRWKKNRRTI) the chain is on the cytoplasmic side.

As to quaternary structure, non-covalent dimer of an alpha and a beta subunit. IL2R exists in 3 different forms: a high affinity dimer, an intermediate affinity monomer (beta subunit), and a low affinity monomer (alpha subunit). The high and intermediate affinity forms also associate with a gamma subunit.

The protein localises to the membrane. Its function is as follows. Receptor for interleukin-2. The receptor is involved in the regulation of immune tolerance by controlling regulatory T cells (TREGs) activity. TREGs suppress the activation and expansion of autoreactive T-cells. This chain is Interleukin-2 receptor subunit alpha (IL2RA), found in Ovis aries (Sheep).